Consider the following 1187-residue polypeptide: MEEDEDQFLLSSLGVTSANPEDLEQKILDEATKKPDNDEGGSVEEKSTQLEGTNLLSSSQNELLNKLRAVKFEIDAVASTVENVDEIAAEKGLKKDDESDLQGLHSGSALQHALATDRLRSLKKRKIQLEKELTGLHGQSASSSADHGNLLRDLVKEKPSLKRKLKEIRKPSRRDGKKVKVVSFREDTDFDAVFDGASAGFVETERDELVRKGILTPFHKLDGFERRLQQPGPSNSRNLPEGDDENEDSSIIDRAVQSMSLAAKARPTTKLLDAEDLPKLEPPTAPFRRLRKLYKTPNSPDNEAKKRKAGKKSKKTRPLPEKKWRKRISREDSSLQGSGDGRRILTTSSCEEEELDDFDDADDNERSSVQLEGGLNIPECIFRKLFDYQRVGVQWLWELHCQRAGGIIGDEMGLGKTIQVLSFLGSLHFSKMYKPSIIICPVTLLRQWRREAQKWYPDFHVEILHDSAQDSGHGKGQGKASESDYDSESSVDSDHEPKSKNTKKWDSLLNRVLNSESGLLITTYEQLRLQGEKLLNIEWGYAVLDEGHRIRNPNSDITLVCKQLQTVHRIIMTGAPIQNKLTELWSLFDFVFPGKLGVLPVFEAEFSVPITVGGYANASPLQVSTAYRCAVVLRDLIMPYLLRRMKADVNAHLTKKTEHVLFCSLTVEQRSTYRAFLASSEVEQIFDGNRNSLYGIDVMRKICNHPDLLEREHSHQNPDYGNPERSGKMKVVAEVLKVWKQQGHRVLLFSQTQQMLDILESFLVANEYSYRRMDGLTPVKQRMALIDEFNNSEDMFVFVLTTKVGGLGTNLTGANRVIIFDPDWNPSNDMQARERAWRIGQKKDVTVYRLITRGTIEEKVYHRQIYKHFLTNKILKNPQQRRFFKARDMKDLFILKDDGDSNASTETSNIFSQLAEEINIVGVQSDKKPESDTQLALHKTAEGSSEQTDVEMTDKTGEAMDEETNILKSLFDAHGIHSAVNHDAIMNANDEEEKMRLEHQASQVAQRAAEALRQSRMLRSRESISVPTWTGRSGCAGAPSSVRRRFGSTVNSRLTQTGDKPSAIKNGISAGLSSGKAPSSAELLNRIRGSREQAIGVGLEQPQSSFPSSSGSSSRVGSLQPEVLIRKICSFVQQKGGSADTTSIVNHFRDIVSFNDKQLFKNLLKEIATLEKDQNRSFWVLKSEYKD.

The tract at residues 1-55 (MEEDEDQFLLSSLGVTSANPEDLEQKILDEATKKPDNDEGGSVEEKSTQLEGTNL) is disordered. Over residues 9–19 (LLSSLGVTSAN) the composition is skewed to polar residues. Positions 23–48 (LEQKILDEATKKPDNDEGGSVEEKST) are enriched in basic and acidic residues. A coiled-coil region spans residues 110–170 (LQHALATDRL…LKRKLKEIRK (61 aa)). A Nuclear localization signal 1 motif is present at residues 162–169 (KRKLKEIR). Disordered regions lie at residues 223–247 (GFER…DENE) and 273–343 (DAED…DGRR). Short sequence motifs (nuclear localization signal) lie at residues 290-297 (LRKLYKTP) and 310-317 (GKKSKKTR). Basic residues predominate over residues 305–328 (KKRKAGKKSKKTRPLPEKKWRKRI). Positions 397–594 (WELHCQRAGG…WSLFDFVFPG (198 aa)) constitute a Helicase ATP-binding domain. 410–417 (DEMGLGKT) is a binding site for ATP. Positions 467–501 (SAQDSGHGKGQGKASESDYDSESSVDSDHEPKSKN) are disordered. Residues 492-501 (DSDHEPKSKN) are compositionally biased toward basic and acidic residues. A DEGH box motif is present at residues 545-548 (DEGH). The Helicase C-terminal domain maps to 730-890 (KVVAEVLKVW…RRFFKARDMK (161 aa)). Residues 987 to 1016 (NANDEEEKMRLEHQASQVAQRAAEALRQSR) adopt a coiled-coil conformation. Positions 1050–1059 (VNSRLTQTGD) are enriched in polar residues. A disordered region spans residues 1050–1075 (VNSRLTQTGDKPSAIKNGISAGLSSG).

It belongs to the SNF2/RAD54 helicase family. Homodimer. Binds DNA.

The protein localises to the nucleus. Essential factor involved in transcription-coupled nucleotide excision repair (TCR) which allows RNA polymerase II-blocking lesions to be rapidly removed from the transcribed strand of active genes. Upon DNA-binding, it locally modifies DNA conformation by wrapping the DNA around itself, thereby modifying the interface between stalled RNA polymerase II and DNA. It is required for transcription-coupled repair complex formation. The protein is Protein CHROMATIN REMODELING 8 of Arabidopsis thaliana (Mouse-ear cress).